Consider the following 136-residue polypeptide: HTH-type transcriptional regulator CysB (136 aa).

The HTH lysR-type domain occupies 1–59; sequence MDVRQLRSLVTLVEVRFSVSRAAECLHLVQSAVTQHLKQLEAELGTRLFVRHGKRLVGL. The segment at residues 19 to 38 is a DNA-binding region (H-T-H motif); the sequence is VSRAAECLHLVQSAVTQHLK.

Belongs to the LysR transcriptional regulatory family.

In terms of biological role, this protein is a positive regulator of gene expression for the cysteine regulon. This is HTH-type transcriptional regulator CysB (cysB) from Thiocapsa roseopersicina.